A 1104-amino-acid chain; its full sequence is Collagenase ColA (1104 aa).

An N-terminal signal peptide occupies residues 1–39 (MKKNLKRGELTKLKLVERWSATFTLAAFILFNSSFKVLA). Residues 40 to 86 (ADKKVENSNNGQITREINADQISKTELNNEVATDNNRPLGPSIAPSR) constitute a propeptide that is removed on maturation. Residues 87-761 (ARNNKIYTFD…YVYDVVFHGM (675 aa)) form an S1 metalloprotease domain region. Residues 93-367 (YTFDELNRMN…AANDLDLNFG (275 aa)) form an activator domain region. The tract at residues 377 to 646 (DFNKIKADAR…MDSLLNNIDN (270 aa)) is catalytic subdomain. Glu-477 provides a ligand contact to Ca(2+). His-502 contributes to the Zn(2+) binding site. Glu-503 is a catalytic residue. His-506 lines the Zn(2+) pocket. 3 residues coordinate Ca(2+): Gly-510, Val-514, and Gly-516. Zn(2+) is bound at residue Glu-534. Positions 654–767 (DEYVNGHEAK…FHGMNTDTNT (114 aa)) are helper subdomain. An S2 domain region spans residues 762 to 860 (NTDTNTDVHV…KKIKVVEDKP (99 aa)). Ca(2+) contacts are provided by Asn-772, Lys-773, Asp-800, Asp-802, Asp-841, Glu-866, Glu-868, Asn-870, Asp-894, Asp-897, Glu-993, Glu-995, Asn-997, Leu-1016, Asp-1020, Lys-1022, and Asp-1023. The PKD domain occupies 774–862 (EPKAVIKSDS…IKVVEDKPVE (89 aa)). The segment at 865–979 (NESEPNNDFE…TYTVNVKGNL (115 aa)) is S3a collagen-binding domain. The tract at residues 992–1104 (KEVENNNDFD…GNYIVNLQNK (113 aa)) is S3b collagen-binding domain.

The protein belongs to the peptidase M9B family. Collagenase subfamily. Requires Ca(2+) as cofactor. Zn(2+) serves as cofactor.

The protein resides in the secreted. It catalyses the reaction Digestion of native collagen in the triple helical region at Xaa-|-Gly bonds. With synthetic peptides, a preference is shown for Gly at P3 and P1', Pro and Ala at P2 and P2', and hydroxyproline, Ala or Arg at P3'.. Its function is as follows. Clostridial collagenases are among the most efficient degraders of eukaryotic collagen known; saprophytes use collagen as a carbon source while pathogens additionally digest collagen to aid in host colonization. Has both tripeptidylcarboxypeptidase on Gly-X-Y and endopeptidase activities; the endopeptidase cuts within the triple helix region of collagen while tripeptidylcarboxypeptidase successively digests the exposed ends, thus clostridial collagenases can digest large sections of collagen. This Clostridium perfringens (strain 13 / Type A) protein is Collagenase ColA (colA).